We begin with the raw amino-acid sequence, 80 residues long: UPF0057 membrane protein ZK632.10 (80 aa).

2 consecutive transmembrane segments (helical) span residues 4-24 and 32-52; these read ILLA…DVGC and ILLT…IILC.

This sequence belongs to the UPF0057 (PMP3) family.

It localises to the membrane. This is UPF0057 membrane protein ZK632.10 from Caenorhabditis elegans.